A 108-amino-acid chain; its full sequence is MHTLLLLAALSNQITFITTQQGDIYTVIPQVILSEPCVCQVQILSVRNGTWGQSHTQQKQTLSLPANQPIELSRLSVNISSEDSVKIILTVSNGQSLHLSQQWPSSAR.

A signal peptide spans 1-8; it reads MHTLLLLA.

The protein belongs to the CsgC/AgfC family.

It localises to the periplasm. Plays a role in the extracellular assembly of CsgA into thin aggregative fimbriae (Tafi) fibers. Assembly may also require CsgE. Tafi are thought to be assembled via an extracellular nucleation-precipitation (ENP) pathway, and possibly also via an intracellular non-CsgC-dependent pathway. In Salmonella arizonae (strain ATCC BAA-731 / CDC346-86 / RSK2980), this protein is Curli assembly protein CsgC.